The following is a 226-amino-acid chain: N-(5'-phosphoribosyl)anthranilate isomerase (226 aa).

The protein belongs to the TrpF family.

The enzyme catalyses N-(5-phospho-beta-D-ribosyl)anthranilate = 1-(2-carboxyphenylamino)-1-deoxy-D-ribulose 5-phosphate. It functions in the pathway amino-acid biosynthesis; L-tryptophan biosynthesis; L-tryptophan from chorismate: step 3/5. The chain is N-(5'-phosphoribosyl)anthranilate isomerase from Synechococcus sp. (strain JA-3-3Ab) (Cyanobacteria bacterium Yellowstone A-Prime).